A 140-amino-acid chain; its full sequence is Hemoglobin subunit beta (140 aa).

The Globin domain occupies 1–140 (GGSDVSAFLA…VGEALAKGYH (140 aa)). Heme b-binding residues include H57 and H86.

Belongs to the globin family. Heterotetramer of either two alpha-B chains or two alpha-C chains and two beta chains.

The beta chain is a component of adult hemoglobins B. And C. This is Hemoglobin subunit beta (HBB) from Aquarana catesbeiana (American bullfrog).